The chain runs to 425 residues: Mothers against decapentaplegic homolog 3 (425 aa).

The residue at position 2 (Ser-2) is an N-acetylserine. Phosphothreonine; by CDK2 and CDK4 is present on Thr-8. The region spanning 10–136 is the MH1 domain; the sequence is PIVKRLLGWK…YQRVETPVLP (127 aa). Residue Lys-33 forms a Glycyl lysine isopeptide (Lys-Gly) (interchain with G-Cter in ubiquitin) linkage. Zn(2+) is bound at residue Cys-64. A Glycyl lysine isopeptide (Lys-Gly) (interchain with G-Cter in ubiquitin) cross-link involves residue Lys-81. The Zn(2+) site is built by Cys-109, Cys-121, and His-126. Positions 137 to 231 are linker; sequence PVLVPRHTEI…QPVTYCEPAF (95 aa). Residues 165–177 show a composition bias toward polar residues; that stretch reads NFPAGIEPQSNIP. Residues 165 to 208 are disordered; that stretch reads NFPAGIEPQSNIPETPPPGYLSEDGETSDHQMNHSMDAGSPNLS. Thr-179 carries the phosphothreonine; by CDK2, CDK4 and MAPK modification. A Phosphoserine; by GSK3 and MAPK modification is found at Ser-204. Position 208 is a phosphoserine; by MAPK (Ser-208). Ser-213 is modified (phosphoserine; by CDK2 and CDK4). The 194-residue stretch at 232–425 folds into the MH2 domain; sequence WCSISYYELN…SPSIRCSSVS (194 aa). A sufficient for interaction with XPO4 region spans residues 271-324; that stretch reads LGLLSNVNRNAAVELTRRHIGRGVRLYYIGGEVFAECLSDSAIFVQSPNCNQRY. The residue at position 378 (Lys-378) is an N6-acetyllysine. Phosphoserine is present on Ser-416. A Phosphoserine; by CK1 modification is found at Ser-418. Phosphoserine; by TGFBR1 is present on residues Ser-422, Ser-423, and Ser-425.

This sequence belongs to the dwarfin/SMAD family. In terms of assembly, monomer; in the absence of TGF-beta. Homooligomer; in the presence of TGF-beta. Heterotrimer; forms a heterotrimer in the presence of TGF-beta consisting of two molecules of C-terminally phosphorylated SMAD2 or SMAD3 and one of SMAD4 to form the transcriptionally active SMAD2/SMAD3-SMAD4 complex. Part of a complex consisting of MAGI2/ARIP1, ACVR2A, ACVR1B and SMAD3. Forms a complex with SMAD2 and TRIM33 upon addition of TGF-beta. Found in a complex composed of SMAD3, RAN and XPO4; within the complex interacts directly with XPO4. Component of the multimeric complex SMAD3/SMAD4/JUN/FOS which forms at the AP1 promoter site; required for synergistic transcriptional activity in response to TGF-beta. Part of a ternary complex composed of SMAD3, ITCH/AIP4 and NEDD9/HEF1; within the complex NEDD9/HEF1 interacts (via N-terminus) with ITCH/AIP4; the complex mediates ubiquitination and proteasomal degradation of NEDD9/HEF1. Interacts with NEDD9; the interaction promotes NEDD9 ubiquitination and proteasomal degradation. Interacts (via an N-terminal domain) with JUN (via its basic DNA binding and leucine zipper domains); this interaction is essential for DNA binding and cooperative transcriptional activity in response to TGF-beta. Identified in a complex that contains at least ZNF451, SMAD2, SMAD3 and SMAD4. Interacts with PPM1A; the interaction dephosphorylates SMAD3 in the C-terminal SXS motif leading to disruption of the SMAD2/3-SMAD4 complex, nuclear export and termination of TGF-beta signaling. Interacts (via MH2 domain) with ZMIZ1 (via SP-RING-type domain); in the TGF-beta signaling pathway increases the activity of the SMAD3/SMAD4 transcriptional complex. Interacts (when phosphorylated) with RNF111; RNF111 acts as an enhancer of the transcriptional responses by mediating ubiquitination and degradation of SMAD3 inhibitors. Interacts (dephosphorylated form via the MH1 and MH2 domains) with RANBP3 (via its C-terminal R domain); the interaction results in the export of dephosphorylated SMAD3 out of the nucleus and termination of the TGF-beta signaling. Interacts (via MH2 domain) with LEMD3; the interaction represses SMAD3 transcriptional activity through preventing the formation of the heteromeric complex with SMAD4 and translocation to the nucleus. Interacts (via the linker region) with EP300 (C-terminal); the interaction promotes SMAD3 acetylation and is enhanced by TGF-beta phosphorylation in the C-terminal of SMAD3. This interaction can be blocked by competitive binding of adenovirus oncoprotein E1A to the same C-terminal site on EP300, which then results in partially inhibited SMAD3/SMAD4 transcriptional activity. Interacts with TGFBR1. Interacts with TGFB1I1. Interacts with PRDM16. Interacts with SNW1. Interacts (via MH2 domain) with ZFYVE9. Interacts with HDAC1. Interacts with TGIF2. Interacts with SKOR1. Interacts with SKOR2. Interacts with DACH1; the interaction inhibits the TGF-beta signaling. Interacts with RBPMS. Interacts (via MH2 domain) with MECOM. Interacts with WWTR1 (via its coiled-coil domain). Interacts with SKI; the interaction represses SMAD3 transcriptional activity. Interacts with MEN1. Interacts with IL1F7. Interaction with CSNK1G2. Interacts with PDPK1 (via PH domain). Interacts with DAB2; the interactions are enhanced upon TGF-beta stimulation. Interacts with USP15. Interacts with PPP5C; the interaction decreases SMAD3 phosphorylation and protein levels. Interacts with LDLRAD4 (via the SMAD interaction motif). Interacts with PMEPA1. Interacts with ZNF451. Interacts with ZFHX3. Interacts weakly with ZNF8. Interacts with STUB1, HSPA1A, HSPA1B, HSP90AA1 and HSP90AB1. Interacts with YAP1 (when phosphorylated at 'Ser-55'). Interacts with MAGI2/ARIP1. Interacts (via MH2 domain) with CITED2 (via C-terminus). Interacts with HGS. Interacts with WWP1. Interacts with TTRAP. Interacts with FOXL2. Interacts with PML. Interacts with NEDD4L; the interaction requires TGF-beta stimulation. Interacts with ZC3H3. Interacts with TGIF. Interacts with CREBBP. Interacts with ATF2. Interacts with NEDD9; the interaction is inhibited by oxidation of NEDD9. Interacts with MTMR4; negatively regulates TGF-beta signaling through SMAD3 dephosphorylation and retention in endosomes. In terms of processing, phosphorylated on serine and threonine residues. Enhanced phosphorylation in the linker region on Thr-179, Ser-204 and Ser-208 on EGF and TGF-beta treatment. Ser-208 is the main site of MAPK-mediated phosphorylation. CDK-mediated phosphorylation occurs in a cell-cycle dependent manner and inhibits both the transcriptional activity and antiproliferative functions of SMAD3. This phosphorylation is inhibited by flavopiridol. Maximum phosphorylation at the G(1)/S junction. Also phosphorylated on serine residues in the C-terminal SXS motif by TGFBR1 and ACVR1. TGFBR1-mediated phosphorylation at these C-terminal sites is required for interaction with SMAD4, nuclear location and transactivational activity, and appears to be a prerequisite for the TGF-beta mediated phosphorylation in the linker region. Dephosphorylated in the C-terminal SXS motif by PPM1A. This dephosphorylation disrupts the interaction with SMAD4, promotes nuclear export and terminates TGF-beta-mediated signaling. Phosphorylation at Ser-418 by CSNK1G2/CK1 promotes ligand-dependent ubiquitination and subsequent proteasome degradation, thus inhibiting SMAD3-mediated TGF-beta responses. Phosphorylated by PDPK1. Acetylation in the nucleus by EP300 in the MH2 domain regulates positively its transcriptional activity and is enhanced by TGF-beta. Post-translationally, poly-ADP-ribosylated by PARP1 and PARP2. ADP-ribosylation negatively regulates SMAD3 transcriptional responses during the course of TGF-beta signaling. In terms of processing, ubiquitinated. Monoubiquitinated, leading to prevent DNA-binding. Deubiquitination by USP15 alleviates inhibition and promotes activation of TGF-beta target genes. Ubiquitinated by RNF111, leading to its degradation: only SMAD3 proteins that are 'in use' are targeted by RNF111, RNF111 playing a key role in activating SMAD3 and regulating its turnover. Undergoes STUB1-mediated ubiquitination and degradation. In terms of tissue distribution, highly expressed in the brain and ovary. Detected in the pyramidal cells of the hippocampus, granule cells of the dentate gyrus, granular cells of the cerebral cortex and the granulosa cells of the ovary.

The protein localises to the cytoplasm. Its subcellular location is the nucleus. Functionally, receptor-regulated SMAD (R-SMAD) that is an intracellular signal transducer and transcriptional modulator activated by TGF-beta (transforming growth factor) and activin type 1 receptor kinases. Binds the TRE element in the promoter region of many genes that are regulated by TGF-beta and, on formation of the SMAD3/SMAD4 complex, activates transcription. Also can form a SMAD3/SMAD4/JUN/FOS complex at the AP-1/SMAD site to regulate TGF-beta-mediated transcription. Has an inhibitory effect on wound healing probably by modulating both growth and migration of primary keratinocytes and by altering the TGF-mediated chemotaxis of monocytes. This effect on wound healing appears to be hormone-sensitive. Regulator of chondrogenesis and osteogenesis and inhibits early healing of bone fractures. Positively regulates PDPK1 kinase activity by stimulating its dissociation from the 14-3-3 protein YWHAQ which acts as a negative regulator. The sequence is that of Mothers against decapentaplegic homolog 3 (SMAD3) from Sus scrofa (Pig).